Consider the following 441-residue polypeptide: Protein translocase subunit SecY (441 aa).

Transmembrane regions (helical) follow at residues 24-44 (LFVL…VPGI), 77-97 (ILAL…LLAT), 123-143 (ATVV…PNML), 152-172 (FSFY…LMWL), 181-201 (IGNG…PSAI), 215-235 (PLVL…VVFV), 272-292 (VMPA…TQWF), 313-333 (PLYL…YTAM), 373-393 (LIGG…TSAW), and 397-417 (FYFG…FIVQ).

Belongs to the SecY/SEC61-alpha family. In terms of assembly, component of the Sec protein translocase complex. Heterotrimer consisting of SecY, SecE and SecG subunits. The heterotrimers can form oligomers, although 1 heterotrimer is thought to be able to translocate proteins. Interacts with the ribosome. Interacts with SecDF, and other proteins may be involved. Interacts with SecA.

The protein localises to the cell inner membrane. In terms of biological role, the central subunit of the protein translocation channel SecYEG. Consists of two halves formed by TMs 1-5 and 6-10. These two domains form a lateral gate at the front which open onto the bilayer between TMs 2 and 7, and are clamped together by SecE at the back. The channel is closed by both a pore ring composed of hydrophobic SecY resides and a short helix (helix 2A) on the extracellular side of the membrane which forms a plug. The plug probably moves laterally to allow the channel to open. The ring and the pore may move independently. In Haemophilus influenzae (strain ATCC 51907 / DSM 11121 / KW20 / Rd), this protein is Protein translocase subunit SecY.